A 349-amino-acid polypeptide reads, in one-letter code: N-acetyltaurine hydrolase (349 aa).

Residues His26, His28, Glu169, His201, His230, and Asp298 each coordinate a divalent metal cation.

It belongs to the metallo-dependent hydrolases superfamily. Phosphotriesterase family. Requires a divalent metal cation as cofactor. As to expression, expressed primarily in proximal tubules of the kidney.

It is found in the cytoplasm. It localises to the cytosol. It catalyses the reaction N-acetyltaurine + H2O = taurine + acetate. It carries out the reaction N-propanoyltaurine + H2O = propanoate + taurine. The enzyme catalyses N-acetyl-L-methionine + H2O = L-methionine + acetate. The catalysed reaction is N-acetyl-L-isoleucine + H2O = L-isoleucine + acetate. It catalyses the reaction N-acetyl-L-leucine + H2O = L-leucine + acetate. It carries out the reaction N-acetyl-L-valine + H2O = L-valine + acetate. In terms of biological role, N-acetyltaurine hydrolase that regulates feeding by catalyzing the hydrolysis of N-acetyltaurine into taurine and acetate. N-acetyltaurine has anorexigenic and anti-obesity effects that are dependent on GFRAL receptor and GDF15. PTER also acts on other N-acetyl amino acids (Met, Ile, Leu, Val) and N-propionyltaurine, but at lower rates. Binds resiniferotoxin, a vanilloid that desensitizes nociceptive neurons. This chain is N-acetyltaurine hydrolase, found in Rattus norvegicus (Rat).